Consider the following 75-residue polypeptide: U6-lycotoxin-Ls1g (75 aa).

The first 21 residues, M1–A21, serve as a signal peptide directing secretion. Residues E22 to R25 constitute a propeptide that is removed on maturation.

It belongs to the neurotoxin 19 (CSTX) family. 06 (U6-Lctx) subfamily. In terms of processing, contains 4 disulfide bonds. In terms of tissue distribution, expressed by the venom gland.

The protein resides in the secreted. The protein is U6-lycotoxin-Ls1g of Lycosa singoriensis (Wolf spider).